A 375-amino-acid polypeptide reads, in one-letter code: MKFELDTTDGKARRGRLIFDRGVIETPAFMPVGTYGTVKGMTPDEVKATGAQVCLGNTFHLMLRPGTEIIKQHGGLHKFMNWDFPILTDSGGFQVFSLGAMRKITEEGVLFSSPVNGEKIMMTPESSMQVQRDLGSDIVMIFDECTPYPATEKEAKDSMELSLRWAKRSKEGHGDNPSALFGIIQGGMYPELRAQSQAGLEEIGFDGYALGGLSVGEPKNEMINILDHCAYKMPADKPRYLMGVGKPEDLVESVRRGIDMFDCVMPTRNARNGHLFITTGVVKIRNAVHKTDTGPLDPECDCHTCGNYSRAYLHHLDKCNEILGARLNTIHNLRYYQRVMEGLRNAISAGKLDEFVQDFYARRGQDVPELADITN.

Asp-89 acts as the Proton acceptor in catalysis. Residues 89–93, Asp-143, Gln-185, and Gly-212 each bind substrate; that span reads DSGGF. Residues 243 to 249 are RNA binding; sequence GVGKPED. The active-site Nucleophile is the Asp-262. Positions 267 to 271 are RNA binding; important for wobble base 34 recognition; sequence TRNAR. Zn(2+) is bound by residues Cys-300, Cys-302, Cys-305, and His-331.

This sequence belongs to the queuine tRNA-ribosyltransferase family. As to quaternary structure, homodimer. Within each dimer, one monomer is responsible for RNA recognition and catalysis, while the other monomer binds to the replacement base PreQ1. Zn(2+) is required as a cofactor.

It carries out the reaction 7-aminomethyl-7-carbaguanine + guanosine(34) in tRNA = 7-aminomethyl-7-carbaguanosine(34) in tRNA + guanine. It participates in tRNA modification; tRNA-queuosine biosynthesis. Functionally, catalyzes the base-exchange of a guanine (G) residue with the queuine precursor 7-aminomethyl-7-deazaguanine (PreQ1) at position 34 (anticodon wobble position) in tRNAs with GU(N) anticodons (tRNA-Asp, -Asn, -His and -Tyr). Catalysis occurs through a double-displacement mechanism. The nucleophile active site attacks the C1' of nucleotide 34 to detach the guanine base from the RNA, forming a covalent enzyme-RNA intermediate. The proton acceptor active site deprotonates the incoming PreQ1, allowing a nucleophilic attack on the C1' of the ribose to form the product. After dissociation, two additional enzymatic reactions on the tRNA convert PreQ1 to queuine (Q), resulting in the hypermodified nucleoside queuosine (7-(((4,5-cis-dihydroxy-2-cyclopenten-1-yl)amino)methyl)-7-deazaguanosine). The sequence is that of Queuine tRNA-ribosyltransferase from Pseudoalteromonas translucida (strain TAC 125).